Consider the following 178-residue polypeptide: Adenine phosphoribosyltransferase (178 aa).

It belongs to the purine/pyrimidine phosphoribosyltransferase family. In terms of assembly, homodimer.

Its subcellular location is the cytoplasm. It catalyses the reaction AMP + diphosphate = 5-phospho-alpha-D-ribose 1-diphosphate + adenine. The protein operates within purine metabolism; AMP biosynthesis via salvage pathway; AMP from adenine: step 1/1. Catalyzes a salvage reaction resulting in the formation of AMP, that is energically less costly than de novo synthesis. The protein is Adenine phosphoribosyltransferase of Helicobacter hepaticus (strain ATCC 51449 / 3B1).